Here is a 223-residue protein sequence, read N- to C-terminus: Riboflavin kinase (223 aa).

The tract at residues 1–89 (MHRINALKHL…KHIFCGDEDK (89 aa)) is unknown. Positions 90 to 223 (VELYGNVITG…IMIEDRSACE (134 aa)) are riboflavin kinase. 99–104 (GLGEGQ) contacts CDP. Mg(2+) contacts are provided by Thr-128 and Asn-130. FMN is bound by residues Ser-185 and Glu-193. 198–201 (VHLR) provides a ligand contact to CDP.

Belongs to the archaeal riboflavin kinase family. Requires Mg(2+) as cofactor.

It catalyses the reaction riboflavin + CTP = CDP + FMN + H(+). Its pathway is cofactor biosynthesis; FMN biosynthesis; FMN from riboflavin (CTP route): step 1/1. In terms of biological role, catalyzes the CTP-dependent phosphorylation of riboflavin (vitamin B2) to form flavin mononucleotide (FMN). The chain is Riboflavin kinase (ribK) from Methanococcoides burtonii (strain DSM 6242 / NBRC 107633 / OCM 468 / ACE-M).